A 652-amino-acid chain; its full sequence is UvrABC system protein C (652 aa).

The GIY-YIG domain maps to 19–96; the sequence is KTSGVYLWKD…IKKHKPRYNI (78 aa). One can recognise a UVR domain in the interval 203-238; the sequence is EDVSGTLKEKMKEAAEKKEFEKAARLRDGIQAVYAL.

This sequence belongs to the UvrC family. As to quaternary structure, interacts with UvrB in an incision complex.

It localises to the cytoplasm. Functionally, the UvrABC repair system catalyzes the recognition and processing of DNA lesions. UvrC both incises the 5' and 3' sides of the lesion. The N-terminal half is responsible for the 3' incision and the C-terminal half is responsible for the 5' incision. The protein is UvrABC system protein C of Treponema denticola (strain ATCC 35405 / DSM 14222 / CIP 103919 / JCM 8153 / KCTC 15104).